A 290-amino-acid chain; its full sequence is uncharacterized protein (290 aa).

Disordered regions lie at residues 105-156 and 259-290; these read LKHK…KLTV and EGAQ…KSKK. Residues 114 to 130 are compositionally biased toward polar residues; it reads KATQQARKRNFISSKSK. Basic and acidic residues-rich tracts occupy residues 143-156 and 261-280; these read RESK…KLTV and AQRD…EPVL.

This is an uncharacterized protein from Homo sapiens (Human).